A 150-amino-acid polypeptide reads, in one-letter code: UPF0756 membrane protein ABSDF1616 (150 aa).

4 helical membrane passes run 1–21 (MLAQ…CGLL), 45–65 (FFPY…TIGV), 83–103 (FISF…WLGG), and 115–135 (VVAG…GVPV).

Belongs to the UPF0756 family.

Its subcellular location is the cell membrane. The protein is UPF0756 membrane protein ABSDF1616 of Acinetobacter baumannii (strain SDF).